The sequence spans 327 residues: Interleukin-12 subunit beta (327 aa).

The N-terminal stretch at 1 to 22 (MHPQQLVVSWFSLVLLTSPIVA) is a signal peptide. Residues 23 to 106 (IWELEKNVYV…LSRSLLLLHK (84 aa)) enclose the Ig-like C2-type domain. Cysteines 50 and 90 form a disulfide. An N-linked (GlcNAc...) asparagine glycan is attached at asparagine 223. One can recognise a Fibronectin type-III domain in the interval 238–327 (PPKNLQLRPL…WSEWASVSCS (90 aa)).

Belongs to the IL-12B family. As to quaternary structure, heterodimer with IL12A; disulfide-linked. The heterodimer is known as interleukin IL-12. Heterodimer with IL23A; disulfide-linked. The heterodimer is known as interleukin IL-23. Also secreted as a monomer. Interacts with NBR1; this interaction promotes IL-12 secretion.

Its subcellular location is the secreted. Cytokine that can act as a growth factor for activated T and NK cells, enhance the lytic activity of NK/lymphokine-activated killer cells, and stimulate the production of IFN-gamma by resting PBMC. Functionally, associates with IL23A to form the IL-23 interleukin, a heterodimeric cytokine which functions in innate and adaptive immunity. IL-23 may constitute with IL-17 an acute response to infection in peripheral tissues. IL-23 binds to a heterodimeric receptor complex composed of IL12RB1 and IL23R, activates the Jak-Stat signaling cascade, stimulates memory rather than naive T-cells and promotes production of pro-inflammatory cytokines. IL-23 induces autoimmune inflammation and thus may be responsible for autoimmune inflammatory diseases and may be important for tumorigenesis. This is Interleukin-12 subunit beta (IL12B) from Cervus elaphus (Red deer).